Here is a 430-residue protein sequence, read N- to C-terminus: Adenylosuccinate synthetase (430 aa).

Residues 12 to 18 (GDEGKGK) and 40 to 42 (GHT) each bind GTP. Asp-13 (proton acceptor) is an active-site residue. Mg(2+) is bound by residues Asp-13 and Gly-40. Residues 13-16 (DEGK), 38-41 (NAGH), Thr-128, Arg-142, Gln-223, Thr-238, and Arg-302 contribute to the IMP site. Catalysis depends on His-41, which acts as the Proton donor. 298–304 (TTTGRPR) is a binding site for substrate. GTP is bound by residues Arg-304, 330-332 (LLD), and 412-414 (SVG).

It belongs to the adenylosuccinate synthetase family. As to quaternary structure, homodimer. It depends on Mg(2+) as a cofactor.

It is found in the cytoplasm. It catalyses the reaction IMP + L-aspartate + GTP = N(6)-(1,2-dicarboxyethyl)-AMP + GDP + phosphate + 2 H(+). It functions in the pathway purine metabolism; AMP biosynthesis via de novo pathway; AMP from IMP: step 1/2. In terms of biological role, plays an important role in the de novo pathway of purine nucleotide biosynthesis. Catalyzes the first committed step in the biosynthesis of AMP from IMP. This chain is Adenylosuccinate synthetase, found in Listeria monocytogenes serovar 1/2a (strain ATCC BAA-679 / EGD-e).